The chain runs to 1451 residues: Transcription elongation factor SPT6 (1451 aa).

The span at 1–12 shows a compositional bias: basic and acidic residues; that stretch reads MEETGDSKLVPR. A disordered region spans residues 1–217; sequence MEETGDSKLV…EDDETRQRRI (217 aa). A Nuclear localization signal motif is present at residues 8–12; the sequence is KLVPR. Over residues 29 to 51 the composition is skewed to acidic residues; sequence EEEEGEDVFDSSEEDEDIDEDED. Basic residues predominate over residues 76–85; it reads SKKRRKHKRR. The Nuclear localization signal motif lies at 77–85; sequence KKRRKHKRR. The segment covering 88-100 has biased composition (acidic residues); the sequence is EEDDRLSEDDLDL. Residue S94 is modified to Phosphoserine. Residues 120–125 carry the Nuclear localization signal motif; sequence KRLKRV. 4 positions are modified to phosphoserine: S134, S136, S148, and S155. Acidic residues predominate over residues 153–162; that stretch reads FFSEDEEEEE. The segment covering 180–192 has biased composition (basic and acidic residues); it reads HENRNRTADKGGI. Over residues 194–211 the composition is skewed to acidic residues; that stretch reads DELDDFIEDDEFSDEDDE. Phosphoserine occurs at positions 206 and 295. The SH2 domain maps to 1257–1354; sequence PYYFPFNGRQ…RLLNEMTSSE (98 aa).

The protein belongs to the SPT6 family. Interacts with CTR9.

It is found in the nucleus. Its subcellular location is the chromosome. Its function is as follows. Histone H3-H4 chaperone that plays a role in maintenance of chromatin structure during RNA polymerase II transcription elongation thereby repressing transcription initiation from cryptic promoters. Mediates the reassembly of nucleosomes onto the promoters of at least a selected set of genes during repression; the nucleosome reassembly is essential for transcriptional repression. Essential for viability. The protein is Transcription elongation factor SPT6 (SPT6) of Saccharomyces cerevisiae (strain ATCC 204508 / S288c) (Baker's yeast).